The chain runs to 423 residues: Putative RING-H2 finger protein ATL49 (423 aa).

Residues 43 to 63 (ILLIIIILSIIFFISGLLHIL) form a helical membrane-spanning segment. The RING-type; atypical zinc-finger motif lies at 126 to 168 (CPVCLCEFETEDKLRLLPKCSHAFHVECIDTWLLSHSTCPLCR). Disordered regions lie at residues 213–236 (NNDS…DMDG) and 377–399 (HRIP…KTPS). Basic and acidic residues predominate over residues 379–389 (IPPEESLKSEN).

It belongs to the RING-type zinc finger family. ATL subfamily.

Its subcellular location is the membrane. It carries out the reaction S-ubiquitinyl-[E2 ubiquitin-conjugating enzyme]-L-cysteine + [acceptor protein]-L-lysine = [E2 ubiquitin-conjugating enzyme]-L-cysteine + N(6)-ubiquitinyl-[acceptor protein]-L-lysine.. It participates in protein modification; protein ubiquitination. Its function is as follows. May be involved in female gametophyte development. This Arabidopsis thaliana (Mouse-ear cress) protein is Putative RING-H2 finger protein ATL49 (ATL49).